A 435-amino-acid polypeptide reads, in one-letter code: Adenylosuccinate synthetase (435 aa).

Residues 13–19 (GDEGKGK) and 41–43 (GHT) contribute to the GTP site. Aspartate 14 functions as the Proton acceptor in the catalytic mechanism. Positions 14 and 41 each coordinate Mg(2+). Residues 14-17 (DEGK), 39-42 (NAGH), threonine 130, arginine 144, glutamine 225, threonine 240, and arginine 304 contribute to the IMP site. The active-site Proton donor is the histidine 42. Position 300–306 (300–306 (ATTGRPR)) interacts with substrate. GTP-binding positions include arginine 306, 332–334 (KLD), and 419–421 (STG).

This sequence belongs to the adenylosuccinate synthetase family. Homodimer. It depends on Mg(2+) as a cofactor.

It localises to the cytoplasm. The enzyme catalyses IMP + L-aspartate + GTP = N(6)-(1,2-dicarboxyethyl)-AMP + GDP + phosphate + 2 H(+). Its pathway is purine metabolism; AMP biosynthesis via de novo pathway; AMP from IMP: step 1/2. Functionally, plays an important role in the de novo pathway of purine nucleotide biosynthesis. Catalyzes the first committed step in the biosynthesis of AMP from IMP. This is Adenylosuccinate synthetase from Nitrosospira multiformis (strain ATCC 25196 / NCIMB 11849 / C 71).